The chain runs to 176 residues: Pituitary adenylate cyclase-activating polypeptide (176 aa).

The signal sequence occupies residues 1 to 24; sequence MTMCSGARLALLVYGIIMHSSVYC. A propeptide spanning residues 25–80 is cleaved from the precursor; sequence SPAAAGLRFPGIRPEDEAYDEDGNPLQDFYDSDPPGVGGPASTLRDAYALYYPAEE. Residues 150–158 are important for receptor binding; that stretch reads VKKYLAAVL. The residue at position 158 (Leu-158) is a Leucine amide. The residue at position 169 (Lys-169) is a Lysine amide. Positions 173 to 176 are excised as a propeptide; the sequence is IAYL.

It belongs to the glucagon family.

Its subcellular location is the secreted. In terms of biological role, PACAP is a neuropeptide involved in diverse array of physiological processes through activating the PACAP subfamily of class B1 G protein-coupled receptors: VIP receptor 1 (VIPR1), VIP receptor 2 (VIPR2), and PACAP type I receptor (ADCYAP1R1). Exerts neuroprotective and general cytoprotective effects due to anti-apoptotic, anti-inflammatory, and antioxidant actions. Promotes neuron projection development through the RAPGEF2/Rap1/B-Raf/ERK pathway. In chromaffin cells, induces long-lasting increase of intracellular calcium concentrations and neuroendocrine secretion. Involved in the control of glucose homeostasis, induces insulin secretion by pancreatic beta cells. PACAP exists in two bioactive forms from proteolysis of the same precursor protein, PACAP27 and PACAP38, which differ by eleven amino acid residues in the C-terminus. This is Pituitary adenylate cyclase-activating polypeptide (ADCYAP1) from Sus scrofa (Pig).